A 381-amino-acid polypeptide reads, in one-letter code: Chaperone protein DnaJ (381 aa).

The J domain occupies 5–70 (DFYEVLGVSR…QKKAAYDQYG (66 aa)). A CR-type zinc finger spans residues 136 to 214 (GVSKEIEVPT…CHGQGRKQKT (79 aa)). Zn(2+) contacts are provided by Cys-149, Cys-152, Cys-166, Cys-169, Cys-188, Cys-191, Cys-202, and Cys-205. 4 CXXCXGXG motif repeats span residues 149–156 (CDTCEGTG), 166–173 (CGTCHGHG), 188–195 (CPTCHGKG), and 202–209 (CNVCHGQG).

This sequence belongs to the DnaJ family. Homodimer. Requires Zn(2+) as cofactor.

Its subcellular location is the cytoplasm. In terms of biological role, participates actively in the response to hyperosmotic and heat shock by preventing the aggregation of stress-denatured proteins and by disaggregating proteins, also in an autonomous, DnaK-independent fashion. Unfolded proteins bind initially to DnaJ; upon interaction with the DnaJ-bound protein, DnaK hydrolyzes its bound ATP, resulting in the formation of a stable complex. GrpE releases ADP from DnaK; ATP binding to DnaK triggers the release of the substrate protein, thus completing the reaction cycle. Several rounds of ATP-dependent interactions between DnaJ, DnaK and GrpE are required for fully efficient folding. Also involved, together with DnaK and GrpE, in the DNA replication of plasmids through activation of initiation proteins. The polypeptide is Chaperone protein DnaJ (Vibrio vulnificus (strain CMCP6)).